The sequence spans 999 residues: RING finger domain and kelch repeat-containing protein DDB_G0271372 (999 aa).

An RING-type zinc finger spans residues 7-49; the sequence is CPNCLKVFNNPRQLECDHILCTRCIEGVYNPGRTPIIKCPVCD. Low complexity predominate over residues 92–143; it reads STGSSNNNNNNNNNNNNNNNNFVINNSNNKNNGATTTTTTTTTTTNSNSNST. Disordered regions lie at residues 92–147 and 159–209; these read STGS…KSKV and ASPK…SSPP. Over residues 165 to 196 the composition is skewed to polar residues; the sequence is GSSQGSLTTINNQKKLTLSPQRASSTTTTSVN. Residues 258-302 form a B box-type zinc finger; sequence AELSKCNDHDQKKFTIFCTDCDQLLCDECLNNNQQQHENHQLNKI. The Zn(2+) site is built by Cys-263, His-266, Cys-286, and His-294. A coiled-coil region spans residues 355–402; it reads DIDTMIENLKERKNALISQIDKEYEEQKLELKDQIETINTTIVDIQNN. 2 stretches are compositionally biased toward low complexity: residues 485–516 and 526–536; these read GVSSSPTGTGSNGTPQQQQQQSANGNPTIITT and SPSPTSSSSST. The segment at 485–637 is disordered; it reads GVSSSPTGTG…TSTNGSNTKI (153 aa). Over residues 552–612 the composition is skewed to polar residues; it reads LSSQNYDNFG…SHGSKLNDNI (61 aa). Positions 613–635 are enriched in low complexity; that stretch reads NTNNNNSPSPTSSSTTSTNGSNT. Kelch repeat units follow at residues 655–700, 702–745, 748–793, 796–842, and 844–892; these read ITAR…YDNN, TIYR…VFDG, YIYL…YHPT, CIYV…FDGS, and YINI…SMNL. A compositionally biased stretch (low complexity) spans 904-924; sequence NSFSSISSHSSLNSSSSNNGI. Residues 904 to 936 form a disordered region; it reads NSFSSISSHSSLNSSSSNNGISGSGGSGGDNEI.

The chain is RING finger domain and kelch repeat-containing protein DDB_G0271372 from Dictyostelium discoideum (Social amoeba).